The chain runs to 487 residues: Glutamyl-tRNA(Gln) amidotransferase subunit A (487 aa).

Residues K75 and S150 each act as charge relay system in the active site. The Acyl-ester intermediate role is filled by S174.

This sequence belongs to the amidase family. GatA subfamily. Heterotrimer of A, B and C subunits.

The enzyme catalyses L-glutamyl-tRNA(Gln) + L-glutamine + ATP + H2O = L-glutaminyl-tRNA(Gln) + L-glutamate + ADP + phosphate + H(+). Its function is as follows. Allows the formation of correctly charged Gln-tRNA(Gln) through the transamidation of misacylated Glu-tRNA(Gln) in organisms which lack glutaminyl-tRNA synthetase. The reaction takes place in the presence of glutamine and ATP through an activated gamma-phospho-Glu-tRNA(Gln). The protein is Glutamyl-tRNA(Gln) amidotransferase subunit A of Syntrophomonas wolfei subsp. wolfei (strain DSM 2245B / Goettingen).